Here is a 175-residue protein sequence, read N- to C-terminus: MAIDFKEHIASVKDFPNKGIIFRDITPILQDGKLYRAATHELAEYAKSRGAEVIVGPEARGFIVGCPVATELGIGFVPARKPHKLPREVESASYDLEYGSNVLEMHKDAIKPGQKVVICDDLMATAGTLHATKELIENLGGEVVGAAFYIELTDLKGREQFPDLDIYSLVKYHGA.

Belongs to the purine/pyrimidine phosphoribosyltransferase family. In terms of assembly, homodimer.

It is found in the cytoplasm. The catalysed reaction is AMP + diphosphate = 5-phospho-alpha-D-ribose 1-diphosphate + adenine. Its pathway is purine metabolism; AMP biosynthesis via salvage pathway; AMP from adenine: step 1/1. Catalyzes a salvage reaction resulting in the formation of AMP, that is energically less costly than de novo synthesis. The polypeptide is Adenine phosphoribosyltransferase (Lactobacillus gasseri (strain ATCC 33323 / DSM 20243 / BCRC 14619 / CIP 102991 / JCM 1131 / KCTC 3163 / NCIMB 11718 / NCTC 13722 / AM63)).